The primary structure comprises 96 residues: Small ribosomal subunit protein bS6 (96 aa).

Belongs to the bacterial ribosomal protein bS6 family.

Binds together with bS18 to 16S ribosomal RNA. The polypeptide is Small ribosomal subunit protein bS6 (Acidothermus cellulolyticus (strain ATCC 43068 / DSM 8971 / 11B)).